Here is a 68-residue protein sequence, read N- to C-terminus: UPF0253 protein AHA_2115 (68 aa).

Belongs to the UPF0253 family.

The polypeptide is UPF0253 protein AHA_2115 (Aeromonas hydrophila subsp. hydrophila (strain ATCC 7966 / DSM 30187 / BCRC 13018 / CCUG 14551 / JCM 1027 / KCTC 2358 / NCIMB 9240 / NCTC 8049)).